The following is a 170-amino-acid chain: UPF0220 protein C8D2.02c (170 aa).

The next 4 helical transmembrane spans lie at 23–43, 54–74, 101–121, and 136–156; these read LGVY…VDAA, LHIT…IVIV, ILFI…TVFI, and MGSA…ALWI.

The protein belongs to the UPF0220 family.

Its subcellular location is the membrane. The sequence is that of UPF0220 protein C8D2.02c from Schizosaccharomyces pombe (strain 972 / ATCC 24843) (Fission yeast).